Here is a 375-residue protein sequence, read N- to C-terminus: Dihydroorotate dehydrogenase (quinone) (375 aa).

FMN contacts are provided by residues 78 to 82 (AGLDK) and T102. Residue K82 coordinates substrate. Position 127–131 (127–131 (NRMGF)) interacts with substrate. Residues N159 and N192 each contribute to the FMN site. N192 provides a ligand contact to substrate. S195 functions as the Nucleophile in the catalytic mechanism. N197 lines the substrate pocket. The FMN site is built by K230 and T258. 259–260 (NT) provides a ligand contact to substrate. Residues G288, G317, and 338–339 (YT) each bind FMN.

It belongs to the dihydroorotate dehydrogenase family. Type 2 subfamily. Monomer. FMN serves as cofactor.

The protein resides in the cell membrane. It catalyses the reaction (S)-dihydroorotate + a quinone = orotate + a quinol. The protein operates within pyrimidine metabolism; UMP biosynthesis via de novo pathway; orotate from (S)-dihydroorotate (quinone route): step 1/1. Functionally, catalyzes the conversion of dihydroorotate to orotate with quinone as electron acceptor. This chain is Dihydroorotate dehydrogenase (quinone), found in Cyanothece sp. (strain PCC 7425 / ATCC 29141).